The following is a 205-amino-acid chain: SCO2-like protein RP587 (205 aa).

Cu cation is bound by residues Cys82, Cys86, and His172.

This sequence belongs to the SCO1/2 family.

In Rickettsia prowazekii (strain Madrid E), this protein is SCO2-like protein RP587.